Here is a 56-residue protein sequence, read N- to C-terminus: Small ribosomal subunit protein uS14 (56 aa).

Cys-21, Cys-24, Cys-39, and Cys-42 together coordinate Zn(2+).

Belongs to the universal ribosomal protein uS14 family. Zinc-binding uS14 subfamily. As to quaternary structure, part of the 30S ribosomal subunit. The cofactor is Zn(2+).

Functionally, binds 16S rRNA, required for the assembly of 30S particles. The chain is Small ribosomal subunit protein uS14 from Pyrococcus abyssi (strain GE5 / Orsay).